The sequence spans 183 residues: Auxin-responsive protein IAA20 (183 aa).

Disordered stretches follow at residues 1-23 (MELE…TATA) and 42-77 (GFEE…NKRR). Positions 3–7 (LELGL) match the EAR-like (transcriptional repression) motif. Residues 98–183 (GGYVKVKMEG…KSVKRLKILV (86 aa)) form the PB1 domain.

It belongs to the Aux/IAA family. As to quaternary structure, homodimers and heterodimers. Expressed at very low levels in etiolated seedlings and flowers.

Its subcellular location is the nucleus. Functionally, aux/IAA proteins are short-lived transcriptional factors that function as repressors of early auxin response genes at low auxin concentrations. The chain is Auxin-responsive protein IAA20 (IAA20) from Oryza sativa subsp. japonica (Rice).